Consider the following 210-residue polypeptide: Large ribosomal subunit protein uL4 (210 aa).

The protein belongs to the universal ribosomal protein uL4 family. As to quaternary structure, part of the 50S ribosomal subunit.

In terms of biological role, one of the primary rRNA binding proteins, this protein initially binds near the 5'-end of the 23S rRNA. It is important during the early stages of 50S assembly. It makes multiple contacts with different domains of the 23S rRNA in the assembled 50S subunit and ribosome. Functionally, forms part of the polypeptide exit tunnel. The protein is Large ribosomal subunit protein uL4 (rplD) of Thermus thermophilus.